The primary structure comprises 184 residues: uncharacterized protein (184 aa).

The interval 146–177 (HPKTSLAQQPNAKATQPPLSKETLNTAKETDP) is disordered. Polar residues predominate over residues 150–172 (SLAQQPNAKATQPPLSKETLNTA).

This is an uncharacterized protein from Picosynechococcus sp. (strain ATCC 27264 / PCC 7002 / PR-6) (Agmenellum quadruplicatum).